We begin with the raw amino-acid sequence, 103 residues long: Integration host factor subunit beta (103 aa).

This sequence belongs to the bacterial histone-like protein family. Heterodimer of an alpha and a beta chain.

In terms of biological role, this protein is one of the two subunits of integration host factor, a specific DNA-binding protein that functions in genetic recombination as well as in transcriptional and translational control. This chain is Integration host factor subunit beta, found in Sinorhizobium medicae (strain WSM419) (Ensifer medicae).